The primary structure comprises 556 residues: 2-isopropylmalate synthase (556 aa).

In terms of domain architecture, Pyruvate carboxyltransferase spans 33–307; the sequence is PIWLSSDLRD…DPQLDFSDID (275 aa). Residues aspartate 42, histidine 246, histidine 248, and asparagine 282 each coordinate Mg(2+). The segment at 439-556 is regulatory domain; that stretch reads ATAPYTLKGH…ALHQAQEAAA (118 aa).

The protein belongs to the alpha-IPM synthase/homocitrate synthase family. LeuA type 2 subfamily. As to quaternary structure, homodimer. Mg(2+) serves as cofactor.

The protein localises to the cytoplasm. It carries out the reaction 3-methyl-2-oxobutanoate + acetyl-CoA + H2O = (2S)-2-isopropylmalate + CoA + H(+). The protein operates within amino-acid biosynthesis; L-leucine biosynthesis; L-leucine from 3-methyl-2-oxobutanoate: step 1/4. In terms of biological role, catalyzes the condensation of the acetyl group of acetyl-CoA with 3-methyl-2-oxobutanoate (2-ketoisovalerate) to form 3-carboxy-3-hydroxy-4-methylpentanoate (2-isopropylmalate). The sequence is that of 2-isopropylmalate synthase from Stutzerimonas stutzeri (strain A1501) (Pseudomonas stutzeri).